A 569-amino-acid chain; its full sequence is Undecaprenyl phosphate-alpha-4-amino-4-deoxy-L-arabinose arabinosyl transferase 1 (569 aa).

12 consecutive transmembrane segments (helical) span residues 27 to 47, 98 to 120, 129 to 149, 151 to 171, 194 to 214, 225 to 245, 275 to 295, 311 to 331, 334 to 354, 366 to 386, 396 to 416, and 420 to 440; these read GLILAFVMFYLLPLMSHGLWI, LFGVRIASALSTGVSVWLTYLLA, INAASALLYMSFGLIAGQAGY, NLDPQFTLWVNLSMVAVWFAI, LMTKGFLALLLPVLIALPYML, YGLVAVVVCALVSLPWVLAVH, PWWFYLPLLFASTLPWALLLP, AYLALWFLLPLAFFSLSSGKL, YIMPCLLPVALLMGQTVVKWL, GVFNTVLASVALVALLYLQAT, FSLSLAYIVVVGWIIANALQV, and LTLWAMPALGIGLLVALLPAA.

The protein belongs to the glycosyltransferase 83 family.

The protein localises to the cell inner membrane. It catalyses the reaction 4-amino-4-deoxy-alpha-L-arabinopyranosyl di-trans,octa-cis-undecaprenyl phosphate + lipid IVA = lipid IIA + di-trans,octa-cis-undecaprenyl phosphate.. It functions in the pathway lipopolysaccharide metabolism; 4-amino-4-deoxy-beta-L-arabinose-lipid A biosynthesis. In terms of biological role, catalyzes the transfer of the L-Ara4N moiety of the glycolipid undecaprenyl phosphate-alpha-L-Ara4N to lipid A. The modified arabinose is attached to lipid A and is required for resistance to polymyxin and cationic antimicrobial peptides. The chain is Undecaprenyl phosphate-alpha-4-amino-4-deoxy-L-arabinose arabinosyl transferase 1 from Pseudomonas fluorescens (strain Pf0-1).